The sequence spans 237 residues: Undecaprenyl-diphosphatase (237 aa).

Helical transmembrane passes span 38–58 (QTAV…FDGI), 65–85 (WRII…GVLF), 92–112 (LFSS…ILMF), 126–146 (MSFL…FPGI), 166–186 (ALQY…ILGL), 191–211 (ITIL…YVLS), and 217–237 (GKIW…YLVG).

Belongs to the UppP family.

Its subcellular location is the cell inner membrane. It carries out the reaction di-trans,octa-cis-undecaprenyl diphosphate + H2O = di-trans,octa-cis-undecaprenyl phosphate + phosphate + H(+). Its function is as follows. Catalyzes the dephosphorylation of undecaprenyl diphosphate (UPP). Confers resistance to bacitracin. In Thermotoga petrophila (strain ATCC BAA-488 / DSM 13995 / JCM 10881 / RKU-1), this protein is Undecaprenyl-diphosphatase.